Reading from the N-terminus, the 862-residue chain is Protein SEY1 (862 aa).

Topologically, residues 1–747 are cytoplasmic; sequence MVSNGHFASA…KRSAIGGMTQ (747 aa). Positions 49–306 constitute a GB1/RHD3-type G domain; that stretch reads GFNYHLISVF…IPADGFAVYA (258 aa). 59–66 serves as a coordination point for GTP; sequence GSQSTGKS. Positions 481–507 form a coiled coil; sequence SNYTQELALYQKDLEKISAQLRKDEMR. Residues 748–768 form a helical membrane-spanning segment; sequence IPVYFYILLLALGWNEIVAVL. The Lumenal segment spans residues 769-771; sequence RNP. A helical transmembrane segment spans residues 772 to 792; it reads LYFFMLFLCAVGAFVTYQLNL. Residues 793–862 lie on the Cytoplasmic side of the membrane; the sequence is WGPMIKMAEA…DDDDEDEGSW (70 aa). Residues 819 to 862 form a disordered region; that stretch reads LEPSEAGPHAARYKNSTEEYEMSNVKAPQRTNSGDDDDEDEGSW. Over residues 852-862 the composition is skewed to acidic residues; the sequence is GDDDDEDEGSW.

The protein belongs to the TRAFAC class dynamin-like GTPase superfamily. GB1/RHD3 GTPase family. RHD3 subfamily.

The protein localises to the endoplasmic reticulum membrane. Functionally, cooperates with the reticulon proteins and tubule-shaping DP1 family proteins to generate and maintain the structure of the tubular endoplasmic reticulum network. Has GTPase activity, which is required for its function in ER organization. This is Protein SEY1 from Uncinocarpus reesii (strain UAMH 1704).